We begin with the raw amino-acid sequence, 513 residues long: Lysine--tRNA ligase (513 aa).

Positions 1–11 (MTEPTQPNAAQ) are enriched in polar residues. Residues 1–22 (MTEPTQPNAAQPNVVPEVDDNK) form a disordered region. Residues Glu-423 and Glu-430 each contribute to the Mg(2+) site.

The protein belongs to the class-II aminoacyl-tRNA synthetase family. In terms of assembly, homodimer. Mg(2+) is required as a cofactor.

The protein resides in the cytoplasm. It catalyses the reaction tRNA(Lys) + L-lysine + ATP = L-lysyl-tRNA(Lys) + AMP + diphosphate. This chain is Lysine--tRNA ligase, found in Paraburkholderia xenovorans (strain LB400).